Here is a 235-residue protein sequence, read N- to C-terminus: MGARERLIVGLDVPTIGEAERLVSTLGDDILFYKIGYQLVFAGGLEFARDLAASGKKIFLDMKLLDIDNTVASGVENIAKMGMSMLTLHAYPKAMKAAVEAAAGSGLCLLGVTVLTSMDADDLAEAGYSQDPHSLVLRRAGQARAAGMGGIVCSAEEAAAVREIVGPDMAIVTPGIRPDGSDKGDQKRVMTPFDALKAGATHLVVGRPIVKAPDPRDAARAILSEMVSALWPANR.

Substrate-binding positions include aspartate 12, lysine 34, 61 to 70 (DMKLLDIDNT), threonine 116, arginine 177, glutamine 186, glycine 206, and arginine 207. The active-site Proton donor is the lysine 63.

This sequence belongs to the OMP decarboxylase family. Type 1 subfamily. Homodimer.

It carries out the reaction orotidine 5'-phosphate + H(+) = UMP + CO2. Its pathway is pyrimidine metabolism; UMP biosynthesis via de novo pathway; UMP from orotate: step 2/2. Functionally, catalyzes the decarboxylation of orotidine 5'-monophosphate (OMP) to uridine 5'-monophosphate (UMP). The sequence is that of Orotidine 5'-phosphate decarboxylase from Rhizobium johnstonii (strain DSM 114642 / LMG 32736 / 3841) (Rhizobium leguminosarum bv. viciae).